The chain runs to 206 residues: Potassium-transporting ATPase KdpC subunit (206 aa).

The chain crosses the membrane as a helical span at residues 14–34 (VLAVFTLFGLGLAYSLIATGI).

Belongs to the KdpC family. In terms of assembly, the system is composed of three essential subunits: KdpA, KdpB and KdpC.

The protein localises to the cell inner membrane. In terms of biological role, part of the high-affinity ATP-driven potassium transport (or Kdp) system, which catalyzes the hydrolysis of ATP coupled with the electrogenic transport of potassium into the cytoplasm. This subunit acts as a catalytic chaperone that increases the ATP-binding affinity of the ATP-hydrolyzing subunit KdpB by the formation of a transient KdpB/KdpC/ATP ternary complex. This is Potassium-transporting ATPase KdpC subunit from Xanthomonas axonopodis pv. citri (strain 306).